A 146-amino-acid chain; its full sequence is Large ribosomal subunit protein uL15 (146 aa).

The interval 1–54 (MTLRLNELAPAEGAKREHRRLGRGIGSGVGKTGGRGIKGQKSRKSGGVRPGFEG) is disordered. A compositionally biased stretch (gly residues) spans 23-37 (RGIGSGVGKTGGRGI).

It belongs to the universal ribosomal protein uL15 family. As to quaternary structure, part of the 50S ribosomal subunit.

Functionally, binds to the 23S rRNA. This is Large ribosomal subunit protein uL15 from Acinetobacter baumannii (strain SDF).